We begin with the raw amino-acid sequence, 1171 residues long: Pesticidal crystal protein Cry1Ea (1171 aa).

The interval 1094–1124 (ESNSSVHASVYEEKSYTDRRRENPCESNRGY) is disordered. A compositionally biased stretch (basic and acidic residues) spans 1103–1117 (VYEEKSYTDRRRENP).

This sequence belongs to the delta endotoxin family.

In terms of biological role, promotes colloidosmotic lysis by binding to the midgut epithelial cells of many lepidopteran larvae including Spodoptera species. The polypeptide is Pesticidal crystal protein Cry1Ea (cry1Ea) (Bacillus thuringiensis subsp. kenyae).